The primary structure comprises 296 residues: 4-hydroxybenzoate octaprenyltransferase (296 aa).

The next 8 membrane-spanning stretches (helical) occupy residues 29–49, 55–75, 102–122, 146–166, 169–189, 219–239, 241–261, and 275–295; these read IGIYLLLWPTLWSLWIAADGV, LLIFVLGVILMRAAGCVINDF, AWITFAVLVALSFGLVLLTNA, YYPQVVLGAAYSWGILMAFTA, GELPASAWLLFLANVLWTVAY, LIIGSLQGLTLLLLVLAGNRF, LGLCFYLGLAVAAACFVWEAW, and FLHNHWAGLAIFLGTVADYAL.

Belongs to the UbiA prenyltransferase family. It depends on Mg(2+) as a cofactor.

The protein resides in the cell inner membrane. It catalyses the reaction all-trans-octaprenyl diphosphate + 4-hydroxybenzoate = 4-hydroxy-3-(all-trans-octaprenyl)benzoate + diphosphate. It functions in the pathway cofactor biosynthesis; ubiquinone biosynthesis. Its function is as follows. Catalyzes the prenylation of para-hydroxybenzoate (PHB) with an all-trans polyprenyl group. Mediates the second step in the final reaction sequence of ubiquinone-8 (UQ-8) biosynthesis, which is the condensation of the polyisoprenoid side chain with PHB, generating the first membrane-bound Q intermediate 3-octaprenyl-4-hydroxybenzoate. In Pseudomonas aeruginosa (strain LESB58), this protein is 4-hydroxybenzoate octaprenyltransferase.